Here is a 332-residue protein sequence, read N- to C-terminus: Formamidase (332 aa).

In terms of domain architecture, CN hydrolase spans 14–259 (FLTALIQYPV…WEIVTAEVYP (246 aa)). Residue Glu60 is the Proton acceptor of the active site. Lys132 functions as the Proton donor in the catalytic mechanism. The Nucleophile role is filled by Cys165.

The protein belongs to the carbon-nitrogen hydrolase superfamily. Aliphatic amidase family.

The enzyme catalyses formamide + H2O = formate + NH4(+). In terms of biological role, is an aliphatic amidase with a restricted substrate specificity, as it only hydrolyzes formamide. The polypeptide is Formamidase (Bacillus cereus (strain G9842)).